A 521-amino-acid polypeptide reads, in one-letter code: U4/U6 small nuclear ribonucleoprotein Prp4 (521 aa).

At Lys-26 the chain carries N6-acetyllysine. 7 WD repeats span residues 228–267 (GDDR…LLHT), 270–317 (GHNT…PVAD), 320–359 (GHTV…EILH), 362–401 (GHSM…CIMF), 404–443 (GHLK…CVYT), 446–486 (AHQN…PLKT), and 489–521 (GHEG…WMAE).

In terms of assembly, component of the precatalytic spliceosome (spliceosome B complex). Component of the U4/U6-U5 tri-snRNP complex, a building block of the precatalytic spliceosome (spliceosome B complex). The U4/U6-U5 tri-snRNP complex is composed of the U4, U6 and U5 snRNAs and at least PRPF3, PRPF4, PRPF6, PRPF8, PRPF31, SNRNP200, TXNL4A, SNRNP40, SNRPB, SNRPD1, SNRPD2, SNRPD3, SNRPE, SNRPF, SNRPG, DDX23, CD2BP2, PPIH, SNU13, EFTUD2, SART1 and USP39, plus LSM2, LSM3, LSM4, LSM5, LSM6, LSM7 and LSM8. Interacts directly with PRPF18, PPIH and PRPF3. Part of a heteromeric complex containing PPIH, PRPF3 and PRPF4 that is stable in the absence of RNA. Interacts with ERCC6.

It localises to the nucleus. Its subcellular location is the nucleus speckle. Plays a role in pre-mRNA splicing as component of the U4/U6-U5 tri-snRNP complex that is involved in spliceosome assembly, and as component of the precatalytic spliceosome (spliceosome B complex). The sequence is that of U4/U6 small nuclear ribonucleoprotein Prp4 (Prpf4) from Mus musculus (Mouse).